Here is an 882-residue protein sequence, read N- to C-terminus: Valine--tRNA ligase (882 aa).

Positions 45–55 (PNVTGKLHLGH) match the 'HIGH' region motif. The 'KMSKS' region signature appears at 519-523 (KMSKS). Residue K522 coordinates ATP. Residues 808–882 (LADLLNVEEE…RIAEMKKIKS (75 aa)) are a coiled coil.

The protein belongs to the class-I aminoacyl-tRNA synthetase family. ValS type 1 subfamily. As to quaternary structure, monomer.

It localises to the cytoplasm. The enzyme catalyses tRNA(Val) + L-valine + ATP = L-valyl-tRNA(Val) + AMP + diphosphate. Functionally, catalyzes the attachment of valine to tRNA(Val). As ValRS can inadvertently accommodate and process structurally similar amino acids such as threonine, to avoid such errors, it has a 'posttransfer' editing activity that hydrolyzes mischarged Thr-tRNA(Val) in a tRNA-dependent manner. The protein is Valine--tRNA ligase of Streptococcus pyogenes serotype M1.